The following is a 567-amino-acid chain: Potassium-transporting ATPase potassium-binding subunit (567 aa).

The next 11 helical transmembrane spans lie at 5–25, 64–84, 136–156, 179–199, 254–274, 285–305, 332–352, 359–376, 421–441, 486–506, and 529–549; these read GWIQILVFCGIIILLVKPLGG, TTYAASLLLFNLAGFLLLYML, GLTVQNFVSAATGVAIAIALI, LYVLLPLCIILTLAFVSLGVP, ISNMIQMVAIFAIGASLTNVF, WAIFAAMGILFVAGVAICYWA, IAMSALFAVVTTAASCGAVIA, ALGGMIPMINMMLGEIII, MLAVLCLPLSILGFTAIASVI, ITIGLAMLMGRFLVILPAMAI, and LFVGLLIGVILVVGGLIFFPA.

The protein belongs to the KdpA family. As to quaternary structure, the system is composed of three essential subunits: KdpA, KdpB and KdpC.

The protein localises to the cell inner membrane. In terms of biological role, part of the high-affinity ATP-driven potassium transport (or Kdp) system, which catalyzes the hydrolysis of ATP coupled with the electrogenic transport of potassium into the cytoplasm. This subunit binds the periplasmic potassium ions and delivers the ions to the membrane domain of KdpB through an intramembrane tunnel. This chain is Potassium-transporting ATPase potassium-binding subunit, found in Brucella anthropi (strain ATCC 49188 / DSM 6882 / CCUG 24695 / JCM 21032 / LMG 3331 / NBRC 15819 / NCTC 12168 / Alc 37) (Ochrobactrum anthropi).